The chain runs to 303 residues: Probable cell division protein WhiA (303 aa).

Residues Ser-272 to Leu-303 constitute a DNA-binding region (H-T-H motif).

The protein belongs to the WhiA family.

Its function is as follows. Involved in cell division and chromosome segregation. This Streptococcus pyogenes serotype M12 (strain MGAS2096) protein is Probable cell division protein WhiA.